The chain runs to 143 residues: Histone H2B.2, sperm (143 aa).

Residues 1-52 are disordered; sequence MPRSPSKSSPRKGSPRKGSPRKGSPKRGGKGAKRAGKGGRRRNVVKRRRRRR. 5 consecutive short sequence motifs (SPKK motif) follow at residues 4–7, 9–12, 14–17, 19–22, and 24–27; these read SPSK, SPRK, and SPKR. Residues 9–52 are compositionally biased toward basic residues; the sequence is SPRKGSPRKGSPRKGSPKRGGKGAKRAGKGGRRRNVVKRRRRRR. 3 positions are modified to phosphoserine: S14, S19, and S24. Residue S130 is glycosylated (O-linked (GlcNAc) serine). K138 participates in a covalent cross-link: Glycyl lysine isopeptide (Lys-Gly) (interchain with G-Cter in ubiquitin).

The protein belongs to the histone H2B family. In terms of assembly, the nucleosome is a histone octamer containing two molecules each of H2A, H2B, H3 and H4 assembled in one H3-H4 heterotetramer and two H2A-H2B heterodimers. The octamer wraps approximately 147 bp of DNA. In terms of processing, monoubiquitination of Lys-138 gives a specific tag for epigenetic transcriptional activation and is also prerequisite for histone H3 'Lys-4' and 'Lys-79' methylation. Phosphorylated on SPKK motifs 3, 4 and 5; which may regulate DNA binding. Dephosphorylated during maturation of spermatids to mature sperm and rephosphorylated at fertilization. Post-translationally, glcNAcylation at Ser-130 promotes monoubiquitination of Lys-138. It fluctuates in response to extracellular glucose, and associates with transcribed genes. Testis-specific.

It is found in the nucleus. It localises to the chromosome. Core component of nucleosome. Nucleosomes wrap and compact DNA into chromatin, limiting DNA accessibility to the cellular machineries which require DNA as a template. Histones thereby play a central role in transcription regulation, DNA repair, DNA replication and chromosomal stability. DNA accessibility is regulated via a complex set of post-translational modifications of histones, also called histone code, and nucleosome remodeling. In Lytechinus pictus (Painted sea urchin), this protein is Histone H2B.2, sperm.